The sequence spans 132 residues: Small ribosomal subunit protein uS11 (132 aa).

This sequence belongs to the universal ribosomal protein uS11 family. Part of the 30S ribosomal subunit.

Located on the platform of the 30S subunit. This is Small ribosomal subunit protein uS11 from Thermoplasma volcanium (strain ATCC 51530 / DSM 4299 / JCM 9571 / NBRC 15438 / GSS1).